Reading from the N-terminus, the 268-residue chain is Energy-coupling factor transporter transmembrane protein EcfT (268 aa).

A run of 5 helical transmembrane segments spans residues 26–46 (IVTFVYIIVMLWASNWQTYAW), 72–92 (IFWLILFTVILQLLFTPGTPI), 106–126 (ILNAIYVMVRFVLIILMSTIL), 149–169 (IGVPVAELALMLAIALRFVPL), and 247–267 (VAFAALIGFVIIFFVIKTWLH).

Belongs to the energy-coupling factor EcfT family. In terms of assembly, forms a stable energy-coupling factor (ECF) transporter complex composed of 2 membrane-embedded substrate-binding proteins (S component), 2 ATP-binding proteins (A component) and 2 transmembrane proteins (T component). May be able to interact with more than 1 S component at a time.

It is found in the cell membrane. Its function is as follows. Transmembrane (T) component of an energy-coupling factor (ECF) ABC-transporter complex. Unlike classic ABC transporters this ECF transporter provides the energy necessary to transport a number of different substrates. This chain is Energy-coupling factor transporter transmembrane protein EcfT, found in Leuconostoc gelidum subsp. gasicomitatum (strain DSM 15947 / CCUG 46042 / CECT 5767 / JCM 12535 / LMG 18811 / NBRC 113245 / TB1-10) (Leuconostoc gasicomitatum).